The sequence spans 554 residues: Developmental and secondary metabolism regulator ve-1 (554 aa).

Residues 31–230 (GRKLWYSLRV…AEQGCRVRIR (200 aa)) form the Velvet domain. The short motif at 45–50 (LRARAC) is the Nuclear localization signal element. Residues 166–175 (TKEDKDKDPE) are compositionally biased toward basic and acidic residues. Disordered regions lie at residues 166-190 (TKED…SFDF), 232-430 (DVRM…PHRL), and 465-528 (PRAY…VDDK). Over residues 276-292 (RSMSGSTERTPYSSISD) the composition is skewed to polar residues. 2 stretches are compositionally biased toward pro residues: residues 363–372 (SYPPPPPPHQ) and 485–494 (LPPPPPPPPQ). The tract at residues 455-487 (SPSNMAAPPYPRAYSVSNSGGLTSAGGYNQLPP) is PEST. Residues 500-528 (RAHDQTFRADPEMRRYQDGARERESVDDK) are compositionally biased toward basic and acidic residues.

This sequence belongs to the velvet family. VeA subfamily. Component of the heterotrimeric velvet complex composed of lae-1, ve-1 and vel-2; Ve-1 acting as a bridging protein between lae-1 and vel-2.

It is found in the nucleus. The protein resides in the cytoplasm. Its function is as follows. Component of the velvet transcription factor complex that controls sexual/asexual developmental ratio in response to light, promoting sexual development in the darkness while stimulating asexual sporulation under illumination. The velvet complex hat acts as a global regulator for secondary metabolite gene expression. The protein is Developmental and secondary metabolism regulator ve-1 of Neurospora crassa (strain ATCC 24698 / 74-OR23-1A / CBS 708.71 / DSM 1257 / FGSC 987).